Reading from the N-terminus, the 206-residue chain is 21.9 kDa heat shock protein (206 aa).

An N-terminal signal peptide occupies residues 1–29 (MAAVAEREVLGMVAAVAAMVVMMAPPAAA). Residues 65–187 (EPAAVALARC…GREPRVVAID (123 aa)) form the sHSP domain. The Cell attachment site signature appears at 94–96 (RGD).

The protein belongs to the small heat shock protein (HSP20) family. As to quaternary structure, may form oligomeric structures.

It is found in the endoplasmic reticulum. The chain is 21.9 kDa heat shock protein (HSP21.9) from Oryza sativa subsp. japonica (Rice).